Reading from the N-terminus, the 351-residue chain is MLKFIQNNREGTALLAILTLFALLGIIDRNYFSLQTFTMIFSSAQILILLAIGATLVMLTRNIDVSVGSITGLCAVTVGMALNAGFGLVASCLFALLVGMVAGFFNGILVTWLRIPAIVATLGTLGLYRGLMLLLTGGKWIEGLPADLKSLSTPILFSISPIGWLTMLLILAMAWLLGNTAFGRSFYATGDNLQGARQLGVRTDSIRIFAFSMNGVMAALAGIVFASQIGFIPNQTGNGLEMKAIAACVLGGISLLGGTGTIIGAILGAFLLTQIDSVLVLLRLPAWWNDFIAGLVLLGVLVFDGRLRCAVERNIRQQKYARFTAQAIISDKKPTVSDNNPAASNKKKAAL.

9 helical membrane-spanning segments follow: residues 14–34, 39–59, 70–90, 93–113, 115–135, 155–175, 213–233, 252–272, and 284–304; these read LLAILTLFALLGIIDRNYFSL, MIFSSAQILILLAIGATLVML, ITGLCAVTVGMALNAGFGLVA, LFALLVGMVAGFFNGILVTWL, IPAIVATLGTLGLYRGLMLLL, ILFSISPIGWLTMLLILAMAW, MNGVMAALAGIVFASQIGFIP, GISLLGGTGTIIGAILGAFLL, and LPAWWNDFIAGLVLLGVLVFD.

It belongs to the binding-protein-dependent transport system permease family. AraH/RbsC subfamily. As to quaternary structure, the complex is composed of two ATP-binding proteins (LsrA), two transmembrane proteins (LsrC and LsrD) and a solute-binding protein (LsrB).

The protein resides in the cell inner membrane. In terms of biological role, part of the ABC transporter complex LsrABCD involved in autoinducer 2 (AI-2) import. Probably responsible for the translocation of the substrate across the membrane. The sequence is that of Autoinducer 2 import system permease protein LsrC (lsrC) from Yersinia pseudotuberculosis serotype O:3 (strain YPIII).